Here is a 219-residue protein sequence, read N- to C-terminus: 3,4-dihydroxy-2-butanone 4-phosphate synthase (219 aa).

Residues 37–38 (RE), Asp-42, 150–154 (RRGHT), and Glu-174 contribute to the D-ribulose 5-phosphate site. Position 38 (Glu-38) interacts with Mg(2+). His-153 lines the Mg(2+) pocket.

Belongs to the DHBP synthase family. As to quaternary structure, homodimer. Mg(2+) is required as a cofactor. It depends on Mn(2+) as a cofactor.

The enzyme catalyses D-ribulose 5-phosphate = (2S)-2-hydroxy-3-oxobutyl phosphate + formate + H(+). It participates in cofactor biosynthesis; riboflavin biosynthesis; 2-hydroxy-3-oxobutyl phosphate from D-ribulose 5-phosphate: step 1/1. In terms of biological role, catalyzes the conversion of D-ribulose 5-phosphate to formate and 3,4-dihydroxy-2-butanone 4-phosphate. This chain is 3,4-dihydroxy-2-butanone 4-phosphate synthase, found in Oleidesulfovibrio alaskensis (strain ATCC BAA-1058 / DSM 17464 / G20) (Desulfovibrio alaskensis).